The chain runs to 176 residues: Ribosome rescue factor SmrB (176 aa).

Positions 93–168 (LDLHGYRQSE…GDAALLVLID (76 aa)) constitute a Smr domain.

Belongs to the SmrB family. Associates with collided ribosomes, but not with correctly translating polysomes.

In terms of biological role, acts as a ribosome collision sensor. Detects stalled/collided disomes (pairs of ribosomes where the leading ribosome is stalled and a second ribosome has collided with it) and endonucleolytically cleaves mRNA at the 5' boundary of the stalled ribosome. Stalled/collided disomes form a new interface (primarily via the 30S subunits) that binds SmrB. Cleaved mRNA becomes available for tmRNA ligation, leading to ribosomal subunit dissociation and rescue of stalled ribosomes. This is Ribosome rescue factor SmrB from Shewanella sp. (strain W3-18-1).